The following is a 520-amino-acid chain: Cyclic GMP-AMP synthase-like receptor (520 aa).

ATP-binding positions include S68 and 80 to 82 (EFD). E80, D82, and D198 together coordinate Mg(2+). GTP is bound at residue D198. K264 contacts ATP. Positions 288 and 294 each coordinate Mn(2+).

Belongs to the mab-21 family. Mg(2+) serves as cofactor. Mn(2+) is required as a cofactor.

It catalyses the reaction GTP + ATP = 2',3'-cGAMP + 2 diphosphate. It carries out the reaction GTP + ATP = pppGp(2'-5')A + diphosphate. The enzyme catalyses pppGp(2'-5')A = 2',3'-cGAMP + diphosphate. Nucleotidyltransferase that catalyzes the formation of cyclic GMP-AMP (2',3'-cGAMP) from ATP and GTP and plays a key role in innate immunity. Acts as a key sensor of double-stranded RNA (dsRNA), the presence of dsRNA in the cytoplasm being a danger signal that triggers the immune responses. Directly binds dsRNA, activating the nucleotidyltransferase activity, leading to synthesis of 2',3'-cGAMP, a second messenger that binds to and activates Sting, thereby triggering the immune response via activation of the NF-kappa-B transcription factor. In Microplitis demolitor (Parasitoid wasp), this protein is Cyclic GMP-AMP synthase-like receptor.